The primary structure comprises 594 residues: Grainyhead-like protein 3 homolog (594 aa).

2 transcription activation regions span residues 25-75 and 28-91; these read NDDE…RIIT and EAWS…SCIE. The 234-residue stretch at 220–453 folds into the Grh/CP2 DB domain; that stretch reads ANRDFECTLE…DMETHPVLFI (234 aa). The tract at residues 483–503 is disordered; sequence SSQSFPESFEAPPSKQQTNED.

It belongs to the grh/CP2 family. Grainyhead subfamily.

The protein resides in the nucleus. Transcription factor playing important roles in primary neurulation and in the differentiation of stratified epithelia of both ectodermal and endodermal origin. Binds directly to the consensus DNA sequence 5'-AACCGGTT-3' acting as an activator and repressor on distinct target genes. This is Grainyhead-like protein 3 homolog (grhl3) from Xenopus tropicalis (Western clawed frog).